The following is a 99-amino-acid chain: High mobility group nucleosome-binding domain-containing protein 3 (99 aa).

Basic and acidic residues-rich tracts occupy residues 1–25 (MPKR…EPTR), 39–53 (PEPK…KEPG), and 62–72 (GKKEEKQEAGK). Residues 1-99 (MPKRKSPENT…KTESVDNEGE (99 aa)) are disordered. Ser6 is modified (phosphoserine). Thr10 carries the phosphothreonine modification. Phosphoserine is present on residues Ser78 and Ser93. Basic and acidic residues predominate over residues 81-93 (GETKAEEAQKTES).

Belongs to the HMGN family. In terms of assembly, interacts with the ligand binding domain of the thyroid receptor (TR) (in vitro). Requires the presence of thyroid hormone for its interaction. Interacts with transcriptional regulator SEHBP. Interacts with nucleosomes. Expressed in kidney, lung, pancreas, testis, skeletal muscle, heart, thyroid gland, pituitary gland, prostate and uterus. Low expression in liver, spleen, placenta and ovaries.

It localises to the nucleus. Functionally, binds to nucleosomes, regulating chromatin structure and consequently, chromatin-dependent processes such as transcription, DNA replication and DNA repair. Affects both insulin and glucagon levels and modulates the expression of pancreatic genes involved in insulin secretion. Regulates the expression of the glucose transporter SLC2A2 by binding specifically to its promoter region and recruiting PDX1 and additional transcription factors. Regulates the expression of SLC6A9, a glycine transporter which regulates the glycine concentration in synaptic junctions in the central nervous system, by binding to its transcription start site. May play a role in ocular development and astrocyte function. In Homo sapiens (Human), this protein is High mobility group nucleosome-binding domain-containing protein 3 (HMGN3).